The sequence spans 752 residues: Protein ORF24 (752 aa).

It belongs to the herpesviridae UL87 family. As to quaternary structure, interacts with ORF34.

Its function is as follows. Plays a role in the expression of late viral mRNAs together with ORF34. In Homo sapiens (Human), this protein is Protein ORF24 (ORF24).